Here is a 216-residue protein sequence, read N- to C-terminus: Lipoprotein-releasing system ATP-binding protein LolD (216 aa).

In terms of domain architecture, ABC transporter spans 2–216 (IHLEGITKSF…TIHMVDGNII (215 aa)). 34–41 (GPSGAGKT) provides a ligand contact to ATP.

Belongs to the ABC transporter superfamily. Lipoprotein translocase (TC 3.A.1.125) family. The complex is composed of two ATP-binding proteins (LolD) and two transmembrane proteins (LolC and LolE).

It localises to the cell inner membrane. Its function is as follows. Part of the ABC transporter complex LolCDE involved in the translocation of mature outer membrane-directed lipoproteins, from the inner membrane to the periplasmic chaperone, LolA. Responsible for the formation of the LolA-lipoprotein complex in an ATP-dependent manner. The polypeptide is Lipoprotein-releasing system ATP-binding protein LolD (Bacteroides fragilis (strain YCH46)).